The following is a 131-amino-acid chain: Profilin-5 (131 aa).

A disulfide bond links Cys13 and Cys115. The short motif at 81-97 (VVIRGKKGTGGITIKKT) is the Involved in PIP2 interaction element. The residue at position 111 (Thr111) is a Phosphothreonine.

This sequence belongs to the profilin family. In terms of assembly, multimer. Occurs in many kinds of cells as a complex with monomeric actin in a 1:1 ratio. In terms of processing, phosphorylated by MAP kinases. Expressed in vegetative tissues. Present in shoots, roots and coleoptiles. Also detected in endosperm and pollen.

The protein localises to the cytoplasm. It is found in the cytoskeleton. With respect to regulation, actin binding is enhanced by calcium Ca(2+). Its function is as follows. Binds to actin and affects the structure of the cytoskeleton. At high concentrations, profilin prevents the polymerization of actin, whereas it enhances it at low concentrations. By binding to PIP2, it inhibits the formation of IP3 and DG. Has a high affinity for poly-proline. The protein is Profilin-5 of Zea mays (Maize).